We begin with the raw amino-acid sequence, 1090 residues long: Protein unc-13 homolog D (1090 aa).

The 148-residue stretch at 92–239 folds into the C2 1 domain; that stretch reads EPEEHQQTLQ…FKEARKDKGQ (148 aa). Positions 127 and 133 each coordinate Ca(2+). Ser-150 is subject to Phosphoserine. Ca(2+) contacts are provided by Asp-206 and Asp-208. The interval 240–543 is interaction with RAB27A; it reads DDFLGNVVLR…AKRVQDHTTV (304 aa). The MHD1 domain occupies 557-677; it reads FQLYISLKEL…RLALVYCSLI (121 aa). Residues 788 to 895 enclose the MHD2 domain; the sequence is EDAILPLMKF…ASSRELIRKY (108 aa). The C2 2 domain maps to 910-1035; it reads ELGAVTVKAS…PGLSGSEEPG (126 aa). 6 residues coordinate Ca(2+): Leu-940, Asp-941, Asp-947, Asp-1005, Asp-1007, and Asp-1013. The disordered stretch occupies residues 1026–1048; sequence PGLSGSEEPGEVPQTRLPLTYPA.

This sequence belongs to the unc-13 family. Interacts with DOC2A. Interacts with RAB27A. Interacts with RHOG; the interaction increases RhoG affinity to the membrane lipids, targets UNC13D to membrane lipids and facilitates cytotoxic granule (CG) docking to the plasma membrane. It depends on Ca(2+) as a cofactor. In terms of tissue distribution, expressed at high levels in spleen, thymus and leukocytes. Also expressed in lung and placenta, and at very low levels in brain, heart, skeletal muscle and kidney. Expressed in cytotoxic T-lymphocytes (CTL) and mast cells.

The protein localises to the cytoplasm. Its subcellular location is the membrane. It localises to the late endosome. It is found in the recycling endosome. The protein resides in the lysosome. Functionally, plays a role in cytotoxic granule exocytosis in lymphocytes. Required for both granule maturation and granule docking and priming at the immunologic synapse. Regulates assembly of recycling and late endosomal structures, leading to the formation of an endosomal exocytic compartment that fuses with perforin-containing granules at the immunologic synapse and licences them for exocytosis. Regulates Ca(2+)-dependent secretory lysosome exocytosis in mast cells. The chain is Protein unc-13 homolog D (UNC13D) from Homo sapiens (Human).